A 517-amino-acid chain; its full sequence is Cytochrome P450 monooxygenase penP (517 aa).

The helical transmembrane segment at 17–37 threads the bilayer; sequence GEATVIWILVALVLVAYLILP. Cysteine 456 provides a ligand contact to heme. Residue asparagine 501 is glycosylated (N-linked (GlcNAc...) asparagine).

The protein belongs to the cytochrome P450 family. The cofactor is heme.

Its subcellular location is the membrane. It participates in secondary metabolite biosynthesis. Cytochrome P450 monooxygenase; part of the gene cluster that mediates the biosynthesis of the indole diterpenes penitrems. The geranylgeranyl diphosphate (GGPP) synthase penG catalyzes the first step in penitrem biosynthesis via conversion of farnesyl pyrophosphate and isopentyl pyrophosphate into geranylgeranyl pyrophosphate (GGPP). Condensation of indole-3-glycerol phosphate with GGPP by the prenyl transferase penC then forms 3-geranylgeranylindole (3-GGI). Epoxidation by the FAD-dependent monooxygenase penM leads to a epoxidized-GGI that is substrate of the terpene cyclase penB for cyclization to yield paspaline. Paspaline is subsequently converted to 13-desoxypaxilline by the cytochrome P450 monooxygenase penP, the latter being then converted to paxilline by the cytochrome P450 monooxygenase penQ. Paxilline is converted to beta-paxitriol via C-10 ketoreduction by the short-chain dehydrogenase PC-15 which can be monoprenylated at the C-20 by the indole diterpene prenyltransferase penD. A two-step elimination (acetylation and elimination) process performed by the O-acetyltransferase PC-16 and the P.simplicissimum ptmI-ortholog not yet identified in P.crustosum, leads to the production of the prenylated form of penijanthine. The FAD-linked oxidoreductase ptmO then converts the prenylated form of penijanthine into PC-M5 which is in turn transformed into PC-M4 by the aromatic dimethylallyltransferase PC-22. A series of oxidation steps involving 4 cytochrome P450 monooxygenases (PC-21, PC-05, PC-23, PC-20) and a FAD-dependent monooxygenase (PC-14) are required for the transformation of PC-M4 to penitrems A and E. Synthesis of these final products is proposed to proceed via penitrems D and C (PC-21, PC-05, PC-14) and penitrems B and F (PC-21, PC-05, PC-14, PC-23). In Penicillium crustosum (Blue mold fungus), this protein is Cytochrome P450 monooxygenase penP.